Consider the following 142-residue polypeptide: Large ribosomal subunit protein uL11 (142 aa).

It belongs to the universal ribosomal protein uL11 family. Part of the ribosomal stalk of the 50S ribosomal subunit. Interacts with L10 and the large rRNA to form the base of the stalk. L10 forms an elongated spine to which L12 dimers bind in a sequential fashion forming a multimeric L10(L12)X complex. In terms of processing, one or more lysine residues are methylated.

Its function is as follows. Forms part of the ribosomal stalk which helps the ribosome interact with GTP-bound translation factors. This Mannheimia succiniciproducens (strain KCTC 0769BP / MBEL55E) protein is Large ribosomal subunit protein uL11.